We begin with the raw amino-acid sequence, 160 residues long: MGRRFVVTVRIRRTGRSPQVRVFLVQFLGSSRPRSANGTRGFVALVLRPERIARRGPQPHPGPGDDDGQRQSGSSPALLWCRFELRGPHHPLPTGARRSAGGLPRHSGSTAPGRGAAGCARCLGSPAARPGPRAGTSRRRAVFAVSTLLRWERFPGHRQA.

The tract at residues 1–63 is interaction with CDK5RAP3 and MDM2; that stretch reads MGRRFVVTVR…RRGPQPHPGP (63 aa). Disordered stretches follow at residues 49-74 and 90-116; these read PERIARRGPQPHPGPGDDDGQRQSGS and HPLPTGARRSAGGLPRHSGSTAPGRGA.

Does not interact with cyclins, CDK1, CDK2, CDK4, CDK5 or CDK6. Binds to BCL6, E2F1, HUWE1, MDM2, MYC, NPM1/B23, TOP1/TOPOI and UBE2I/UBC9. Interacts with TBRG1 and COMMD1. Interacts with CDKN2AIP and E4F1. Interacts with CDK5RAP3 and MDM2; form a ternary complex involved in regulation of p53/TP53. Interacts with NOP53; the interaction is direct and promotes ARF nucleoplasmic relocalization and ubiquitin-mediated proteasomal degradation. Interacts with TTF1 (via the N-terminal region (NRD) and a C-terminal region); the interaction is direct and inhibits the nucleolar localization of TTF1. In terms of processing, ubiquitinated in normal cells by TRIP12 via the ubiquitin fusion degradation (UFD) pathway, a process that mediates ubiquitination at the N-terminus, regardless of the absence of lysine residues. Ubiquitination leads to its proteasomal degradation. In cancer cells, however, TRIP12 is located in a different cell compartment, preventing ubiquitination and degradation. As to expression, widely expressed with very low levels in kidney and colon.

The protein resides in the nucleus. It is found in the nucleolus. It localises to the nucleoplasm. Its function is as follows. Capable of inducing cell cycle arrest in G1 and G2 phases. Acts as a tumor suppressor. Binds to MDM2 and blocks its nucleocytoplasmic shuttling by sequestering it in the nucleolus. This inhibits the oncogenic action of MDM2 by blocking MDM2-induced degradation of p53 and enhancing p53-dependent transactivation and apoptosis. Also induces G2 arrest and apoptosis in a p53-independent manner by preventing the activation of cyclin B1/CDC2 complexes. Binds to BCL6 and down-regulates BCL6-induced transcriptional repression. Binds to E2F1 and MYC and blocks their transcriptional activator activity but has no effect on MYC transcriptional repression. Binds to TOP1/TOPOI and stimulates its activity. This complex binds to rRNA gene promoters and may play a role in rRNA transcription and/or maturation. Interacts with NPM1/B23 and promotes its polyubiquitination and degradation, thus inhibiting rRNA processing. Plays a role in inhibiting ribosome biogenesis, perhaps by binding to the nucleolar localization sequence of transcription termination factor TTF1, and thereby preventing nucleolar localization of TTF1. Interacts with COMMD1 and promotes its 'Lys63'-linked polyubiquitination. Interacts with UBE2I/UBC9 and enhances sumoylation of a number of its binding partners including MDM2 and E2F1. Binds to HUWE1 and represses its ubiquitin ligase activity. May play a role in controlling cell proliferation and apoptosis during mammary gland development. In Rattus norvegicus (Rat), this protein is Tumor suppressor ARF.